A 142-amino-acid polypeptide reads, in one-letter code: Nucleoside diphosphate kinase (142 aa).

ATP-binding residues include lysine 11, phenylalanine 59, arginine 87, threonine 93, arginine 104, and asparagine 114. The active-site Pros-phosphohistidine intermediate is histidine 117.

Belongs to the NDK family. In terms of assembly, homotetramer. Requires Mg(2+) as cofactor.

The protein localises to the cytoplasm. The enzyme catalyses a 2'-deoxyribonucleoside 5'-diphosphate + ATP = a 2'-deoxyribonucleoside 5'-triphosphate + ADP. The catalysed reaction is a ribonucleoside 5'-diphosphate + ATP = a ribonucleoside 5'-triphosphate + ADP. Major role in the synthesis of nucleoside triphosphates other than ATP. The ATP gamma phosphate is transferred to the NDP beta phosphate via a ping-pong mechanism, using a phosphorylated active-site intermediate. In Wigglesworthia glossinidia brevipalpis, this protein is Nucleoside diphosphate kinase.